The following is a 346-amino-acid chain: Golgi-associated RAB2 interactor protein 2 (346 aa).

The disordered stretch occupies residues T275–F346. 2 stretches are compositionally biased toward basic and acidic residues: residues T283–P297 and K334–F346.

It belongs to the GARIN family. In terms of assembly, interacts with CALM1.

It is found in the cell projection. The protein resides in the cilium. The protein localises to the flagellum. Its function is as follows. Seems to play a role in sperm motility. The sequence is that of Golgi-associated RAB2 interactor protein 2 (GARIN2) from Macaca fascicularis (Crab-eating macaque).